We begin with the raw amino-acid sequence, 256 residues long: Tryptophan synthase alpha chain (256 aa).

Residues Glu48 and Asp59 each act as proton acceptor in the active site.

This sequence belongs to the TrpA family. As to quaternary structure, tetramer of two alpha and two beta chains.

The catalysed reaction is (1S,2R)-1-C-(indol-3-yl)glycerol 3-phosphate + L-serine = D-glyceraldehyde 3-phosphate + L-tryptophan + H2O. Its pathway is amino-acid biosynthesis; L-tryptophan biosynthesis; L-tryptophan from chorismate: step 5/5. The alpha subunit is responsible for the aldol cleavage of indoleglycerol phosphate to indole and glyceraldehyde 3-phosphate. This is Tryptophan synthase alpha chain from Caldicellulosiruptor bescii (strain ATCC BAA-1888 / DSM 6725 / KCTC 15123 / Z-1320) (Anaerocellum thermophilum).